A 180-amino-acid polypeptide reads, in one-letter code: MFNLQKRINGNNEDGRYLETRIAVRDKLLAQELQQLETALRDQKQKLWHLEVPSTSCLHELELTVTPQEGIYRGGKFRFKITVPPEYNNVPPVVKCLTKVWHPNINEDGSICLSILRQNSLDQYGWRPTRNLTDVVHGLVSLFNDLMDFNDALNIQAAQMWSQNRESFNHRVREYISRYC.

The UBC core domain occupies 24 to 180; sequence VRDKLLAQEL…RVREYISRYC (157 aa). Cysteine 112 serves as the catalytic Glycyl thioester intermediate.

The protein belongs to the ubiquitin-conjugating enzyme family. UBC12 subfamily.

Its subcellular location is the cytoplasm. It catalyses the reaction [E1 NEDD8-activating enzyme]-S-[NEDD8 protein]-yl-L-cysteine + [E2 NEDD8-conjugating enzyme]-L-cysteine = [E1 NEDD8-activating enzyme]-L-cysteine + [E2 NEDD8-conjugating enzyme]-S-[NEDD8-protein]-yl-L-cysteine.. The protein operates within protein modification; protein neddylation. In terms of biological role, accepts the ubiquitin-like protein NEDD8 from the uba-3-ula-1 E1 complex and catalyzes its covalent attachment to other proteins. Plays a role in male tail tip morphogenesis. In Caenorhabditis elegans, this protein is NEDD8-conjugating enzyme ubc-12.